Consider the following 456-residue polypeptide: MLNNAMSVVILAAGKGTRMYSDLPKVLHTLAGKAMVQHVIDAANELGAAHVHLVYGHGGDLLKQALKDDNLNWVLQAEQLGTGHAMQQAAPFFADDEDILMLYGDVPLISVETLQRLRDAKPQGGIGLLTVKLDDPTGYGRITRENGKVTGIVEHKDATDEQRQIQEINTGILIANGADMKRWLAKLTNNNAQGEYYITDIIALAYQEGREIVAVHPQRLSEVEGVNNRLQLSRLERVYQSEQAEKLLLAGVMLRDPARFDLRGTLTHGRDVEIDTNVIIEGNVTLGNRVKIGTGCVIKNSVIGDDCEISPYTVVEDANLAAACTIGPFARLRPGAELLEGAHVGNFVEMKKARLGKGSKAGHLTYLGDAEIGDNVNIGAGTITCNYDGANKFKTIIGDDVFVGSDTQLVAPVTVGKGATIAAGTTVTRNVGENALAISRVPQTQKEGWRRPVKKK.

The tract at residues methionine 1–arginine 229 is pyrophosphorylase. Residues leucine 11–glycine 14, lysine 25, glutamine 76, glycine 81–threonine 82, tyrosine 103–aspartate 105, glycine 140, glutamate 154, asparagine 169, and asparagine 227 each bind UDP-N-acetyl-alpha-D-glucosamine. Residue aspartate 105 coordinates Mg(2+). Asparagine 227 serves as a coordination point for Mg(2+). The interval leucine 230–alanine 250 is linker. The tract at residues glycine 251–lysine 456 is N-acetyltransferase. Residues arginine 333 and lysine 351 each coordinate UDP-N-acetyl-alpha-D-glucosamine. Histidine 363 (proton acceptor) is an active-site residue. UDP-N-acetyl-alpha-D-glucosamine contacts are provided by tyrosine 366 and asparagine 377. Acetyl-CoA-binding positions include alanine 380, asparagine 386–tyrosine 387, serine 405, alanine 423, and arginine 440.

This sequence in the N-terminal section; belongs to the N-acetylglucosamine-1-phosphate uridyltransferase family. The protein in the C-terminal section; belongs to the transferase hexapeptide repeat family. As to quaternary structure, homotrimer. Mg(2+) serves as cofactor.

The protein localises to the cytoplasm. It carries out the reaction alpha-D-glucosamine 1-phosphate + acetyl-CoA = N-acetyl-alpha-D-glucosamine 1-phosphate + CoA + H(+). The enzyme catalyses N-acetyl-alpha-D-glucosamine 1-phosphate + UTP + H(+) = UDP-N-acetyl-alpha-D-glucosamine + diphosphate. It functions in the pathway nucleotide-sugar biosynthesis; UDP-N-acetyl-alpha-D-glucosamine biosynthesis; N-acetyl-alpha-D-glucosamine 1-phosphate from alpha-D-glucosamine 6-phosphate (route II): step 2/2. The protein operates within nucleotide-sugar biosynthesis; UDP-N-acetyl-alpha-D-glucosamine biosynthesis; UDP-N-acetyl-alpha-D-glucosamine from N-acetyl-alpha-D-glucosamine 1-phosphate: step 1/1. It participates in bacterial outer membrane biogenesis; LPS lipid A biosynthesis. Catalyzes the last two sequential reactions in the de novo biosynthetic pathway for UDP-N-acetylglucosamine (UDP-GlcNAc). The C-terminal domain catalyzes the transfer of acetyl group from acetyl coenzyme A to glucosamine-1-phosphate (GlcN-1-P) to produce N-acetylglucosamine-1-phosphate (GlcNAc-1-P), which is converted into UDP-GlcNAc by the transfer of uridine 5-monophosphate (from uridine 5-triphosphate), a reaction catalyzed by the N-terminal domain. The sequence is that of Bifunctional protein GlmU from Escherichia coli O81 (strain ED1a).